Reading from the N-terminus, the 116-residue chain is MRRFNTIMQGKTNGGNGPESGTVVVTRTQPKTRKPSLYRVLLLNDDYTPMEFVVHVLQRFFQKNLDDATRIMLHVHNHGVGECGVFTYEVAETKVSQVMDFARQNQHPLQCVMEKK.

Residues 1–11 (MRRFNTIMQGK) are compositionally biased toward polar residues. A disordered region spans residues 1–23 (MRRFNTIMQGKTNGGNGPESGTV).

It belongs to the ClpS family. As to quaternary structure, binds to the N-terminal domain of the chaperone ClpA.

Involved in the modulation of the specificity of the ClpAP-mediated ATP-dependent protein degradation. The sequence is that of ATP-dependent Clp protease adapter protein ClpS from Brucella melitensis biotype 2 (strain ATCC 23457).